Reading from the N-terminus, the 295-residue chain is MKPTYCGYAAIIGRPNVGKSTLLNQLLGQKISITSRKPQTTRYQILGVKTFKDIQVIYVDTPGLHAGTERTINRYMNRTARGALRDVDAIVFVIEPHWESQDAWVLDNLKEIETPVFLVINKVDKIKNRAELLPLIEKVSSLYAFQKIIPLSAKTGDQVGTLEQAVHQLMPESPFYFPPEQVTDRSDQFMASEIIREKLMRLLGQEIPYSLAVTLIEFRKEEKIIRISAVIWVEKKSQKGIVIGKGGERLKRVGTNARLDMEKWFGKKVFLQLWVKVKSGWADNERLLRELGFEE.

In terms of domain architecture, Era-type G spans 5-172; the sequence is YCGYAAIIGR…EQAVHQLMPE (168 aa). The G1 stretch occupies residues 13–20; that stretch reads GRPNVGKS. Residue 13 to 20 participates in GTP binding; it reads GRPNVGKS. Residues 39-43 form a G2 region; that stretch reads QTTRY. A G3 region spans residues 60–63; sequence DTPG. GTP is bound by residues 60-64 and 121-124; these read DTPGL and NKVD. Positions 121–124 are G4; it reads NKVD. A G5 region spans residues 151 to 153; sequence LSA. The KH type-2 domain occupies 203-279; the sequence is LGQEIPYSLA…FLQLWVKVKS (77 aa).

This sequence belongs to the TRAFAC class TrmE-Era-EngA-EngB-Septin-like GTPase superfamily. Era GTPase family. In terms of assembly, monomer.

It localises to the cytoplasm. The protein localises to the cell inner membrane. Functionally, an essential GTPase that binds both GDP and GTP, with rapid nucleotide exchange. Plays a role in 16S rRNA processing and 30S ribosomal subunit biogenesis and possibly also in cell cycle regulation and energy metabolism. This Coxiella burnetii (strain CbuK_Q154) (Coxiella burnetii (strain Q154)) protein is GTPase Era.